Reading from the N-terminus, the 156-residue chain is Ribosomal RNA large subunit methyltransferase H (156 aa).

S-adenosyl-L-methionine-binding positions include Leu73, Gly104, and 123–128 (LSAMTL).

Belongs to the RNA methyltransferase RlmH family. Homodimer.

It is found in the cytoplasm. The enzyme catalyses pseudouridine(1915) in 23S rRNA + S-adenosyl-L-methionine = N(3)-methylpseudouridine(1915) in 23S rRNA + S-adenosyl-L-homocysteine + H(+). Functionally, specifically methylates the pseudouridine at position 1915 (m3Psi1915) in 23S rRNA. The protein is Ribosomal RNA large subunit methyltransferase H of Laribacter hongkongensis (strain HLHK9).